A 1252-amino-acid polypeptide reads, in one-letter code: DNA-directed RNA polymerase subunit beta (1252 aa).

The protein belongs to the RNA polymerase beta chain family. As to quaternary structure, the RNAP catalytic core consists of 2 alpha, 1 beta, 1 beta' and 1 omega subunit. When a sigma factor is associated with the core the holoenzyme is formed, which can initiate transcription.

The enzyme catalyses RNA(n) + a ribonucleoside 5'-triphosphate = RNA(n+1) + diphosphate. DNA-dependent RNA polymerase catalyzes the transcription of DNA into RNA using the four ribonucleoside triphosphates as substrates. The protein is DNA-directed RNA polymerase subunit beta of Chlamydia trachomatis serovar D (strain ATCC VR-885 / DSM 19411 / UW-3/Cx).